The following is a 455-amino-acid chain: UDP-N-acetylmuramoylalanine--D-glutamate ligase (455 aa).

Position 119 to 125 (119 to 125 (GTNGKTT)) interacts with ATP.

It belongs to the MurCDEF family.

Its subcellular location is the cytoplasm. The enzyme catalyses UDP-N-acetyl-alpha-D-muramoyl-L-alanine + D-glutamate + ATP = UDP-N-acetyl-alpha-D-muramoyl-L-alanyl-D-glutamate + ADP + phosphate + H(+). It functions in the pathway cell wall biogenesis; peptidoglycan biosynthesis. In terms of biological role, cell wall formation. Catalyzes the addition of glutamate to the nucleotide precursor UDP-N-acetylmuramoyl-L-alanine (UMA). The polypeptide is UDP-N-acetylmuramoylalanine--D-glutamate ligase (Listeria innocua serovar 6a (strain ATCC BAA-680 / CLIP 11262)).